A 219-amino-acid polypeptide reads, in one-letter code: C-8 sterol isomerase erg2 (219 aa).

Residues 1-21 (MKLTKFLTVFIPFIAGLIYYI) form a helical membrane-spanning segment.

The protein belongs to the ERG2 family.

Its subcellular location is the endoplasmic reticulum membrane. It carries out the reaction fecosterol = episterol. The protein operates within steroid metabolism; ergosterol biosynthesis. Functionally, C-8 sterol isomerase; part of the third module of ergosterol biosynthesis pathway that includes by the late steps of the pathway. Erg2 catalyzes the reaction which results in unsaturation at C-7 in the B ring of sterols and thus converts fecosterol to episterol. The third module or late pathway involves the ergosterol synthesis itself through consecutive reactions that mainly occur in the endoplasmic reticulum (ER) membrane. Firstly, the squalene synthase erg9 catalyzes the condensation of 2 farnesyl pyrophosphate moieties to form squalene, which is the precursor of all steroids. Secondly, squalene is converted into lanosterol by the consecutive action of the squalene epoxidase erg1 and the lanosterol synthase erg7. The lanosterol 14-alpha-demethylase erg11/cyp1 catalyzes C14-demethylation of lanosterol to produce 4,4'-dimethyl cholesta-8,14,24-triene-3-beta-ol. In the next steps, a complex process involving various demethylation, reduction and desaturation reactions catalyzed by the C-14 reductase erg24 and the C-4 demethylation complex erg25-erg26-erg27 leads to the production of zymosterol. Erg28 likely functions in the C-4 demethylation complex reaction by tethering erg26 and Erg27 to the endoplasmic reticulum or to facilitate interaction between these proteins. Then, the sterol 24-C-methyltransferase erg6 catalyzes the methyl transfer from S-adenosyl-methionine to the C-24 of zymosterol to form fecosterol. The C-8 sterol isomerase erg2 catalyzes the reaction which results in unsaturation at C-7 in the B ring of sterols and thus converts fecosterol to episterol. The sterol-C5-desaturases erg31 and erg32 then catalyze the introduction of a C-5 double bond in the B ring to produce 5-dehydroepisterol. The C-22 sterol desaturase erg5 further converts 5-dehydroepisterol into ergosta-5,7,22,24(28)-tetraen-3beta-ol by forming the C-22(23) double bond in the sterol side chain. Finally, ergosta-5,7,22,24(28)-tetraen-3beta-ol is substrate of the C-24(28) sterol reductase erg4 to produce ergosterol. In the genus Schizosaccharomyces, a second route exists between lanosterol and fecosterol, via the methylation of lanosterol to eburicol by erg6, followed by C14-demethylation by erg11/cyp1 and C4-demethylation by the demethylation complex erg25-erg26-erg27. The chain is C-8 sterol isomerase erg2 from Schizosaccharomyces pombe (strain 972 / ATCC 24843) (Fission yeast).